The chain runs to 322 residues: tRNA-modifying protein YgfZ (322 aa).

A folate-binding site is contributed by W182.

Belongs to the tRNA-modifying YgfZ family.

Its subcellular location is the cytoplasm. Functionally, folate-binding protein involved in regulating the level of ATP-DnaA and in the modification of some tRNAs. It is probably a key factor in regulatory networks that act via tRNA modification, such as initiation of chromosomal replication. The chain is tRNA-modifying protein YgfZ from Vibrio campbellii (strain ATCC BAA-1116).